The primary structure comprises 460 residues: Bifunctional protein GlmU (460 aa).

The pyrophosphorylase stretch occupies residues 1–235 (MALSAAIVLA…PLTVEGVNDR (235 aa)). UDP-N-acetyl-alpha-D-glucosamine contacts are provided by residues 9–12 (LAAG), Lys-23, Gln-76, and 81–82 (GT). Asp-109 lines the Mg(2+) pocket. UDP-N-acetyl-alpha-D-glucosamine is bound by residues Gly-146, Glu-161, Asn-176, and Asn-233. A Mg(2+)-binding site is contributed by Asn-233. A linker region spans residues 236–256 (VQLAALSKTYNRRVCERWMRD). The interval 257 to 460 (GVTILDPETT…VEGWKPAWER (204 aa)) is N-acetyltransferase. Arg-338 and Lys-356 together coordinate UDP-N-acetyl-alpha-D-glucosamine. His-368 (proton acceptor) is an active-site residue. Tyr-371 and Asn-382 together coordinate UDP-N-acetyl-alpha-D-glucosamine. Residues 391 to 392 (NY) and Ala-428 each bind acetyl-CoA.

The protein in the N-terminal section; belongs to the N-acetylglucosamine-1-phosphate uridyltransferase family. In the C-terminal section; belongs to the transferase hexapeptide repeat family. Homotrimer. Mg(2+) is required as a cofactor.

The protein resides in the cytoplasm. The catalysed reaction is alpha-D-glucosamine 1-phosphate + acetyl-CoA = N-acetyl-alpha-D-glucosamine 1-phosphate + CoA + H(+). The enzyme catalyses N-acetyl-alpha-D-glucosamine 1-phosphate + UTP + H(+) = UDP-N-acetyl-alpha-D-glucosamine + diphosphate. The protein operates within nucleotide-sugar biosynthesis; UDP-N-acetyl-alpha-D-glucosamine biosynthesis; N-acetyl-alpha-D-glucosamine 1-phosphate from alpha-D-glucosamine 6-phosphate (route II): step 2/2. It participates in nucleotide-sugar biosynthesis; UDP-N-acetyl-alpha-D-glucosamine biosynthesis; UDP-N-acetyl-alpha-D-glucosamine from N-acetyl-alpha-D-glucosamine 1-phosphate: step 1/1. Its pathway is bacterial outer membrane biogenesis; LPS lipid A biosynthesis. Its function is as follows. Catalyzes the last two sequential reactions in the de novo biosynthetic pathway for UDP-N-acetylglucosamine (UDP-GlcNAc). The C-terminal domain catalyzes the transfer of acetyl group from acetyl coenzyme A to glucosamine-1-phosphate (GlcN-1-P) to produce N-acetylglucosamine-1-phosphate (GlcNAc-1-P), which is converted into UDP-GlcNAc by the transfer of uridine 5-monophosphate (from uridine 5-triphosphate), a reaction catalyzed by the N-terminal domain. In Bifidobacterium longum (strain NCC 2705), this protein is Bifunctional protein GlmU.